We begin with the raw amino-acid sequence, 465 residues long: Pancreatic triacylglycerol lipase (465 aa).

The signal sequence occupies residues 1–16 (MLLLWILSLFLETVAG). Intrachain disulfides connect cysteine 20–cysteine 26 and cysteine 107–cysteine 118. The active-site Nucleophile is serine 169. The active-site Charge relay system is the aspartate 193. Ca(2+) contacts are provided by glutamate 204, arginine 207, aspartate 209, and aspartate 212. Cysteine 254 and cysteine 278 are oxidised to a cystine. Residue histidine 280 is the Charge relay system of the active site. Disulfide bonds link cysteine 302–cysteine 313 and cysteine 316–cysteine 321. N-linked (GlcNAc...) asparagine glycosylation is found at asparagine 351, asparagine 398, and asparagine 425. Residues 355-465 (WRYRIAVTLS…EEVLLTLQPC (111 aa)) form the PLAT domain. Residues cysteine 449 and cysteine 465 are joined by a disulfide bond.

It belongs to the AB hydrolase superfamily. Lipase family. In terms of assembly, forms a 1:1 stoichiometric complex with (pro)colipase/CLPS.

It is found in the secreted. The catalysed reaction is a triacylglycerol + H2O = a diacylglycerol + a fatty acid + H(+). The enzyme catalyses 1,2,3-tributanoylglycerol + H2O = dibutanoylglycerol + butanoate + H(+). It carries out the reaction 1,2,3-tri-(9Z-octadecenoyl)-glycerol + H2O = di-(9Z)-octadecenoylglycerol + (9Z)-octadecenoate + H(+). It catalyses the reaction all-trans-retinyl hexadecanoate + H2O = all-trans-retinol + hexadecanoate + H(+). The catalysed reaction is 1,2-di-(9Z-octadecenoyl)-glycerol + H2O = (9Z-octadecenoyl)-glycerol + (9Z)-octadecenoate + H(+). With respect to regulation, inhibited by bile salts, is reactivated by (pro)colipase/CLPS. In terms of biological role, plays an important role in fat metabolism. It preferentially splits the esters of long-chain fatty acids at positions 1 and 3, producing mainly 2-monoacylglycerol and free fatty acids, and shows considerably higher activity against insoluble emulsified substrates than against soluble ones. This chain is Pancreatic triacylglycerol lipase (PNLIP), found in Cavia porcellus (Guinea pig).